The chain runs to 87 residues: Chaperone NapD (87 aa).

The protein belongs to the NapD family. Interacts with the cytoplasmic NapA precursor.

It is found in the cytoplasm. In terms of biological role, chaperone for NapA, the catalytic subunit of the periplasmic nitrate reductase. It binds directly and specifically to the twin-arginine signal peptide of NapA, preventing premature interaction with the Tat translocase and premature export. The sequence is that of Chaperone NapD from Escherichia coli O157:H7.